A 127-amino-acid chain; its full sequence is Aspartate 1-decarboxylase (127 aa).

Catalysis depends on Ser-25, which acts as the Schiff-base intermediate with substrate; via pyruvic acid. Ser-25 carries the pyruvic acid (Ser) modification. Thr-57 serves as a coordination point for substrate. Tyr-58 serves as the catalytic Proton donor. Substrate is bound at residue 73–75 (GAA).

It belongs to the PanD family. In terms of assembly, heterooctamer of four alpha and four beta subunits. It depends on pyruvate as a cofactor. In terms of processing, is synthesized initially as an inactive proenzyme, which is activated by self-cleavage at a specific serine bond to produce a beta-subunit with a hydroxyl group at its C-terminus and an alpha-subunit with a pyruvoyl group at its N-terminus.

The protein resides in the cytoplasm. The catalysed reaction is L-aspartate + H(+) = beta-alanine + CO2. It functions in the pathway cofactor biosynthesis; (R)-pantothenate biosynthesis; beta-alanine from L-aspartate: step 1/1. Catalyzes the pyruvoyl-dependent decarboxylation of aspartate to produce beta-alanine. This is Aspartate 1-decarboxylase from Clostridium botulinum (strain ATCC 19397 / Type A).